The sequence spans 538 residues: Translation initiation factor IF-3, chloroplastic (538 aa).

Residues 1-140 constitute a chloroplast transit peptide; sequence MVRSSCLQCD…VTQRKEIAVF (140 aa). The interval 141-290 is head; sequence SASGQAAEPE…EEVEEEQEVL (150 aa). Disordered stretches follow at residues 146–165 and 188–210; these read AAEP…PAAK and RTDS…NWPS. The interval 291-474 is IF-3 like; that stretch reads SWADRRRALA…LILNLAPAGE (184 aa). Residues 484-538 are disordered; sequence AERDRKAAAEEEGEGDDLDFVDENEDEDVEGEGEEEEAEELEEETAEGTEVPTRS. Acidic residues predominate over residues 493-530; sequence EEEGEGDDLDFVDENEDEDVEGEGEEEEAEELEEETAE.

It belongs to the IF-3 family. As to quaternary structure, monomer. Post-translationally, the N-terminus is blocked.

It is found in the plastid. The protein resides in the chloroplast. Functionally, involved in chloroplast protein synthesis. It enhances the poly(A,U,G)-dependent binding of the initiator tRNA to chloroplast 30S subunits. This is Translation initiation factor IF-3, chloroplastic from Euglena gracilis.